Consider the following 159-residue polypeptide: RNA pyrophosphohydrolase (159 aa).

One can recognise a Nudix hydrolase domain in the interval 6–149 (GFRPNVGIIL…KREVYRRALK (144 aa)). The Nudix box motif lies at 38–59 (GGINPDETPEDALYRELNEEVG).

It belongs to the Nudix hydrolase family. RppH subfamily. A divalent metal cation is required as a cofactor.

Functionally, accelerates the degradation of transcripts by removing pyrophosphate from the 5'-end of triphosphorylated RNA, leading to a more labile monophosphorylated state that can stimulate subsequent ribonuclease cleavage. The protein is RNA pyrophosphohydrolase of Pseudomonas putida (strain ATCC 700007 / DSM 6899 / JCM 31910 / BCRC 17059 / LMG 24140 / F1).